Reading from the N-terminus, the 91-residue chain is Small ribosomal subunit protein bS20 (91 aa).

The interval 1–28 (MANTASAEKRNRQAQKRRARNVQVRTGV) is disordered.

Belongs to the bacterial ribosomal protein bS20 family.

Functionally, binds directly to 16S ribosomal RNA. The polypeptide is Small ribosomal subunit protein bS20 (Anaeromyxobacter dehalogenans (strain 2CP-1 / ATCC BAA-258)).